Consider the following 261-residue polypeptide: Phosphonates import ATP-binding protein PhnC (261 aa).

In terms of domain architecture, ABC transporter spans 9-253 (IQLKDVSKIY…VFDDIYNGGN (245 aa)). Position 42–49 (42–49 (GLSGAGKS)) interacts with ATP.

Belongs to the ABC transporter superfamily. Phosphonates importer (TC 3.A.1.9.1) family. As to quaternary structure, the complex is composed of two ATP-binding proteins (PhnC), two transmembrane proteins (PhnE) and a solute-binding protein (PhnD).

The protein localises to the cell membrane. The enzyme catalyses phosphonate(out) + ATP + H2O = phosphonate(in) + ADP + phosphate + H(+). Part of the ABC transporter complex PhnCDE involved in phosphonates import. Responsible for energy coupling to the transport system. This chain is Phosphonates import ATP-binding protein PhnC, found in Lactobacillus gasseri (strain ATCC 33323 / DSM 20243 / BCRC 14619 / CIP 102991 / JCM 1131 / KCTC 3163 / NCIMB 11718 / NCTC 13722 / AM63).